The sequence spans 495 residues: Histidine--tRNA ligase (495 aa).

The segment covering 1–10 (MTTDSEQPNT) has biased composition (polar residues). Residues 1 to 24 (MTTDSEQPNTDFRPEARAPRGFAD) are disordered. Over residues 12–24 (FRPEARAPRGFAD) the composition is skewed to basic and acidic residues.

This sequence belongs to the class-II aminoacyl-tRNA synthetase family. As to quaternary structure, homodimer.

The protein localises to the cytoplasm. It catalyses the reaction tRNA(His) + L-histidine + ATP = L-histidyl-tRNA(His) + AMP + diphosphate + H(+). The chain is Histidine--tRNA ligase (hisS) from Caulobacter vibrioides (strain ATCC 19089 / CIP 103742 / CB 15) (Caulobacter crescentus).